The primary structure comprises 323 residues: O-phosphoserine sulfhydrylase (323 aa).

Position 51 is an N6-(pyridoxal phosphate)lysine (Lys-51). Pyridoxal 5'-phosphate contacts are provided by residues Asn-81 and 184–188 (GTTGT). Residue Arg-220 coordinates substrate. A pyridoxal 5'-phosphate-binding site is contributed by Ser-265.

The protein belongs to the cysteine synthase/cystathionine beta-synthase family. As to quaternary structure, homodimer. It depends on pyridoxal 5'-phosphate as a cofactor.

The catalysed reaction is [CysO sulfur-carrier protein]-C-terminal-Gly-aminoethanethioate + O-phospho-L-serine + H(+) = [CysO sulfur-carrier protein]-Gly-NH-CH2-C(O)-S-L-Cys + phosphate. The protein operates within amino-acid biosynthesis; L-cysteine biosynthesis. Its function is as follows. Catalyzes the formation of a covalent CysO-cysteine adduct via a sulfur transfer, using the thiocarboxylated sulfur carrier protein CysO-COSH as sulfur donor and O-phospho-L-serine (OPS) as sulfur acceptor. Can also use sodium sulfide as sulfur donor in vitro, albeit with less efficiency. This Mycobacterium bovis (strain ATCC BAA-935 / AF2122/97) protein is O-phosphoserine sulfhydrylase (cysM).